A 50-amino-acid chain; its full sequence is MFKRKSTAELAAQMAKLAGNKGGFSSEDKGEWKLKLDNAGNGQAVIRFLP.

As to quaternary structure, homodimer in the absence of DNA, monomer when binding DNA.

Binds preferentially to single-stranded DNA and therefore, destabilizes double-stranded DNA. It is involved in DNA replication, repair and recombination. Binds ss-DNA as the replication fork advances and stimulates the replisome processivity and accuracy. The chain is Single-stranded DNA-binding protein (32) from Escherichia coli (Bacteriophage RB15).